The chain runs to 256 residues: Catechol O-methyltransferase A (256 aa).

A signal peptide spans M1–A27. N58 is a glycosylation site (N-linked (GlcNAc...) asparagine). S-adenosyl-L-methionine-binding residues include V84, S114, E132, and D183. Position 183 (D183) interacts with Mg(2+). K186 contacts substrate. The Mg(2+) site is built by D211 and N212. Substrate contacts are provided by N212 and E241.

This sequence belongs to the class I-like SAM-binding methyltransferase superfamily. Cation-dependent O-methyltransferase family. Requires Mg(2+) as cofactor. As to expression, widely expressed. Has higher expression in females compared to males. Strongly expressed in liver and diencephalon. Expressed at lower levels in hindbrain, spinal cord, eye, telencephalon, spleen, gut, gill and muscle. Detected in ovary and testis. In eye, detected in all layers of the retina with highest expression in the inner nuclear layer. In gut, expressed in the lamina propria but has little or no expression in gut epithelium. In brain, has strongest expression near the midline of the telencephalon, in the periventricular gray zone of the optic tectum, in the preglomerular nucleus, and near the walls of the diencephalic ventricle.

The protein resides in the secreted. The enzyme catalyses a catechol + S-adenosyl-L-methionine = a guaiacol + S-adenosyl-L-homocysteine + H(+). Its function is as follows. Catalyzes the O-methylation, and thereby the inactivation, of catecholamine neurotransmitters and catechol hormones. Shows highest activity towards catecholestrogens and dobutamine. Also has lower activity towards L-DOPA, dopamine and epinephrine. Active towards the xenobiotic compounds methyl-DOPA, carbidopa, isoproterenol, and apomorphine. This Danio rerio (Zebrafish) protein is Catechol O-methyltransferase A.